The primary structure comprises 606 residues: Cryptochrome-1 (606 aa).

Residues 3 to 132 (VNAVHWFRKG…EVIVRISHTL (130 aa)) form the Photolyase/cryptochrome alpha/beta domain. K11 participates in a covalent cross-link: Glycyl lysine isopeptide (Lys-Gly) (interchain with G-Cter in ubiquitin). The LIR 1 signature appears at 50–54 (NRWRF). S71 carries the post-translational modification Phosphoserine; by AMPK. The LIR 2 motif lies at 82 to 87 (DVFPRL). K107 is covalently cross-linked (Glycyl lysine isopeptide (Lys-Gly) (interchain with G-Cter in ubiquitin)). Residues 151–156 (KRFQTL) carry the LIR 3 motif. K159 participates in a covalent cross-link: Glycyl lysine isopeptide (Lys-Gly) (interchain with G-Cter in ubiquitin). At S247 the chain carries Phosphoserine; by MAPK. S252 lines the FAD pocket. Short sequence motifs (LIR) lie at residues 255–260 (LRFGCL) and 271–276 (DLYKKV). S280 is subject to Phosphoserine; by AMPK. The LIR 6 signature appears at 285–290 (SLYGQL). Residue Q289 coordinates FAD. K329 participates in a covalent cross-link: Glycyl lysine isopeptide (Lys-Gly) (interchain with G-Cter in ubiquitin). The LIR 7 signature appears at 335-339 (TGFPW). H355 serves as a coordination point for FAD. The segment at 371-470 (WISWEEGMKV…LIGVNYPKPM (100 aa)) is required for inhibition of CLOCK-BMAL1-mediated transcription. The short motif at 379-384 (KVFEEL) is the LIR 8 element. 387–389 (DAD) contacts FAD. Short sequence motifs (LIR) lie at residues 395–400 (GSWMWL), 411–416 (HCYCPV), and 430–435 (RRYLPV). Residues 471 to 493 (VNHAEASRLNIERMKQIYQQLSR) form an interaction with TIMELESS region. K485 participates in a covalent cross-link: Glycyl lysine isopeptide (Lys-Gly) (interchain with G-Cter in ubiquitin). Short sequence motifs (LIR) lie at residues 486 to 491 (QIYQQL) and 492 to 497 (SRYRGL). Positions 559–606 (YAHGDSQQTHSLKQGRSSAGTGLSSGKRPSQEEDAQSVGPKVQRQSSN) are disordered. Residues 563–586 (DSQQTHSLKQGRSSAGTGLSSGKR) are compositionally biased toward polar residues. K585 participates in a covalent cross-link: Glycyl lysine isopeptide (Lys-Gly) (interchain with G-Cter in ubiquitin). S588 is modified (phosphoserine).

Belongs to the DNA photolyase class-1 family. Component of the circadian core oscillator, which includes the CRY proteins, CLOCK or NPAS2, BMAL1 or BMAL2, CSNK1D and/or CSNK1E, TIMELESS, and the PER proteins. Interacts directly with TIMELESS. Interacts directly with PER1 and PER2; interaction with PER2 inhibits its ubiquitination and vice versa. Interacts with PER3. Interacts with FBXL21. Interacts with FBXL3. Interacts with PPP5C (via TPR repeats). Interacts with CLOCK-BMAL1 independently of PER2 and DNA. Interacts with HDAC1, HDAC2 and SIN3B. Interacts with nuclear receptors AR, NR1D1, NR3C1/GR, RORA and RORC; the interaction with at least NR3C1/GR is ligand dependent. Interacts with PRKDC. Interacts with the G protein subunit alpha GNAS; the interaction may block GPCR-mediated regulation of cAMP concentrations. Interacts with PRMT5. Interacts with EZH2. Interacts with MYBBP1A, DOCK7, HNRNPU, RPL7A, RPL8 and RPS3. Interacts with MAP1LC3B. Interacts with CLOCK. Interacts with BMAL1. Interacts weakly with HDAC3; this interaction is enhanced in the presence of FBXL3. Interacts with TRIM28, KCTD5 and DDB1. Interacts with DTL. Interacts with DDB1-CUL4A complex. Interacts with FOXO1. Interacts with PSMD2 in a KDM8-dependent manner. Interacts with KDM8 in a FBXL3-dependent manner. Interacts with PPARA. Interacts with PPARG in a ligand-dependent manner. Interacts with PPARD (via domain NR LBD) in a ligand-dependent manner. Interacts with NR1I2 (via domain NR LBD) in a ligand-dependent manner. Interacts with NR1I3, VDR and HNF4A. FAD is required as a cofactor. The cofactor is (6R)-5,10-methylene-5,6,7,8-tetrahydrofolate. Phosphorylation on Ser-247 by MAPK is important for the inhibition of CLOCK-BMAL1-mediated transcriptional activity. Phosphorylation by CSNK1E requires interaction with PER1 or PER2. Phosphorylation at Ser-71 and Ser-280 by AMPK decreases protein stability. Phosphorylation at Ser-588 exhibits a robust circadian rhythm with a peak at CT8, increases protein stability, prevents SCF(FBXL3)-mediated degradation and is antagonized by interaction with PRKDC. Post-translationally, ubiquitinated by the SCF(FBXL3) and SCF(FBXL21) complexes, regulating the balance between degradation and stabilization. The SCF(FBXL3) complex is mainly nuclear and mediates ubiquitination and subsequent degradation of CRY1. In contrast, cytoplasmic SCF(FBXL21) complex-mediated ubiquitination leads to stabilize CRY1 and counteract the activity of the SCF(FBXL3) complex. The SCF(FBXL3) and SCF(FBXL21) complexes probably mediate ubiquitination at different Lys residues. Ubiquitination at Lys-11 and Lys-107 are specifically ubiquitinated by the SCF(FBXL21) complex but not by the SCF(FBXL3) complex. Ubiquitination may be inhibited by PER2. Deubiquitinated by USP7. In terms of processing, undergoes autophagy-mediated degradation in the liver in a time-dependent manner. Autophagic degradation of CRY1 (an inhibitor of gluconeogenesis) occurs during periods of reduced feeding allowing induction of gluconeogenesis and maintenance of blood glucose levels. Expressed in cones, amacrine cells, and retinal ganglion cells of the retina (at protein level). Expressed in all tissues examined including heart, brain, spleen, lung, liver, skeletal muscle, kidney and testis. Higher levels in brain, liver and testis. In the retina, highly expressed in the ganglion cell layer (GCL) and in the inner nuclear layer (INL). Evenly distributed in central and peripheral retina. In the brain, highly expressed in the suprachiasmatic nucleus (SCN). High levels in cerebral cortical layers particularly in the pyramidial cell layer of the hippocampus, the granular cell layer of the dentate gyrus (DG) and the pyramidal cell layer of the piriform cortex (PFC).

Its subcellular location is the cytoplasm. The protein localises to the nucleus. With respect to regulation, KL001 (N-[3-(9H-carbazol-9-yl)-2-hydroxypropyl]-N-(2-furanylmethyl)-methanesulfonamide) binds to CRY1 and stabilizes it by inhibiting FBXL3- and ubiquitin-dependent degradation of CRY1 resulting in lengthening of the circadian periods. KL001-mediated CRY1 stabilization can inhibit glucagon-induced gluconeogenesis in primary hepatocytes. Transcriptional repressor which forms a core component of the circadian clock. The circadian clock, an internal time-keeping system, regulates various physiological processes through the generation of approximately 24 hour circadian rhythms in gene expression, which are translated into rhythms in metabolism and behavior. It is derived from the Latin roots 'circa' (about) and 'diem' (day) and acts as an important regulator of a wide array of physiological functions including metabolism, sleep, body temperature, blood pressure, endocrine, immune, cardiovascular, and renal function. Consists of two major components: the central clock, residing in the suprachiasmatic nucleus (SCN) of the brain, and the peripheral clocks that are present in nearly every tissue and organ system. Both the central and peripheral clocks can be reset by environmental cues, also known as Zeitgebers (German for 'timegivers'). The predominant Zeitgeber for the central clock is light, which is sensed by retina and signals directly to the SCN. The central clock entrains the peripheral clocks through neuronal and hormonal signals, body temperature and feeding-related cues, aligning all clocks with the external light/dark cycle. Circadian rhythms allow an organism to achieve temporal homeostasis with its environment at the molecular level by regulating gene expression to create a peak of protein expression once every 24 hours to control when a particular physiological process is most active with respect to the solar day. Transcription and translation of core clock components (CLOCK, NPAS2, BMAL1, BMAL2, PER1, PER2, PER3, CRY1 and CRY2) plays a critical role in rhythm generation, whereas delays imposed by post-translational modifications (PTMs) are important for determining the period (tau) of the rhythms (tau refers to the period of a rhythm and is the length, in time, of one complete cycle). A diurnal rhythm is synchronized with the day/night cycle, while the ultradian and infradian rhythms have a period shorter and longer than 24 hours, respectively. Disruptions in the circadian rhythms contribute to the pathology of cardiovascular diseases, cancer, metabolic syndromes and aging. A transcription/translation feedback loop (TTFL) forms the core of the molecular circadian clock mechanism. Transcription factors, CLOCK or NPAS2 and BMAL1 or BMAL2, form the positive limb of the feedback loop, act in the form of a heterodimer and activate the transcription of core clock genes and clock-controlled genes (involved in key metabolic processes), harboring E-box elements (5'-CACGTG-3') within their promoters. The core clock genes: PER1/2/3 and CRY1/2 which are transcriptional repressors form the negative limb of the feedback loop and interact with the CLOCK|NPAS2-BMAL1|BMAL2 heterodimer inhibiting its activity and thereby negatively regulating their own expression. This heterodimer also activates nuclear receptors NR1D1/2 and RORA/B/G, which form a second feedback loop and which activate and repress BMAL1 transcription, respectively. CRY1 and CRY2 have redundant functions but also differential and selective contributions at least in defining the pace of the SCN circadian clock and its circadian transcriptional outputs. More potent transcriptional repressor in cerebellum and liver than CRY2, though more effective in lengthening the period of the SCN oscillator. On its side, CRY2 seems to play a critical role in tuning SCN circadian period by opposing the action of CRY1. With CRY2, is dispensable for circadian rhythm generation but necessary for the development of intercellular networks for rhythm synchrony. Capable of translocating circadian clock core proteins such as PER proteins to the nucleus. Interacts with CLOCK-BMAL1 independently of PER proteins and is found at CLOCK-BMAL1-bound sites, suggesting that CRY may act as a molecular gatekeeper to maintain CLOCK-BMAL1 in a poised and repressed state until the proper time for transcriptional activation. Represses the CLOCK-BMAL1 induced transcription of BHLHE40/DEC1, ATF4, MTA1, KLF10 and NAMPT. May repress circadian target genes expression in collaboration with HDAC1 and HDAC2 through histone deacetylation. Mediates the clock-control activation of ATR and modulates ATR-mediated DNA damage checkpoint. In liver, mediates circadian regulation of cAMP signaling and gluconeogenesis by binding to membrane-coupled G proteins and blocking glucagon-mediated increases in intracellular cAMP concentrations and CREB1 phosphorylation. Inhibits hepatic gluconeogenesis by decreasing nuclear FOXO1 levels that down-regulates gluconeogenic gene expression. Besides its role in the maintenance of the circadian clock, is also involved in the regulation of other processes. Represses glucocorticoid receptor NR3C1/GR-induced transcriptional activity by binding to glucocorticoid response elements (GREs). Plays a key role in glucose and lipid metabolism modulation, in part, through the transcriptional regulation of genes involved in these pathways, such as LEP or ACSL4. Represses PPARD and its target genes in the skeletal muscle and limits exercise capacity. Plays an essential role in the generation of circadian rhythms in the retina. Represses the transcriptional activity of NR1I2. The sequence is that of Cryptochrome-1 (Cry1) from Mus musculus (Mouse).